The sequence spans 196 residues: Glycerol-3-phosphate acyltransferase (196 aa).

5 helical membrane passes run 4 to 24, 53 to 73, 78 to 98, 114 to 134, and 140 to 160; these read FYIM…VVLT, LGVL…LIAI, LGDA…CYPV, IFLV…ALLV, and VSLG…FTEG.

This sequence belongs to the PlsY family. Probably interacts with PlsX.

The protein localises to the cell inner membrane. It catalyses the reaction an acyl phosphate + sn-glycerol 3-phosphate = a 1-acyl-sn-glycero-3-phosphate + phosphate. Its pathway is lipid metabolism; phospholipid metabolism. Catalyzes the transfer of an acyl group from acyl-phosphate (acyl-PO(4)) to glycerol-3-phosphate (G3P) to form lysophosphatidic acid (LPA). This enzyme utilizes acyl-phosphate as fatty acyl donor, but not acyl-CoA or acyl-ACP. The protein is Glycerol-3-phosphate acyltransferase of Syntrophotalea carbinolica (strain DSM 2380 / NBRC 103641 / GraBd1) (Pelobacter carbinolicus).